The chain runs to 156 residues: Ribonuclease pancreatic (156 aa).

The N-terminal stretch at 1–28 (MALEKSLVLLPLLVLILLVLGWVQPSLG) is a signal peptide. Residues 33–43 (AKKFQRQHMDS) show a composition bias toward basic and acidic residues. Residues 33-52 (AKKFQRQHMDSDSSPSSNST) form a disordered region. Substrate is bound by residues K35 and R38. H40 serves as the catalytic Proton acceptor. 2 N-linked (GlcNAc...) asparagine glycosylation sites follow: N50 and N62. 4 cysteine pairs are disulfide-bonded: C54–C112, C68–C123, C86–C138, and C93–C100. Substrate contacts are provided by residues 69–73 (KPVNT) and K94. N104 is a glycosylation site (N-linked (GlcNAc...) asparagine). R113 is a binding site for substrate. An N-linked (GlcNAc...) asparagine glycan is attached at N116. Catalysis depends on H147, which acts as the Proton donor.

Belongs to the pancreatic ribonuclease family. Monomer. Interacts with and forms tight 1:1 complexes with RNH1. Dimerization of two such complexes may occur. Interaction with RNH1 inhibits this protein.

The protein localises to the secreted. It carries out the reaction an [RNA] containing cytidine + H2O = an [RNA]-3'-cytidine-3'-phosphate + a 5'-hydroxy-ribonucleotide-3'-[RNA].. The enzyme catalyses an [RNA] containing uridine + H2O = an [RNA]-3'-uridine-3'-phosphate + a 5'-hydroxy-ribonucleotide-3'-[RNA].. Endonuclease that catalyzes the cleavage of RNA on the 3' side of pyrimidine nucleotides. Acts on single-stranded and double-stranded RNA. The sequence is that of Ribonuclease pancreatic (RNASE1) from Gorilla gorilla gorilla (Western lowland gorilla).